Consider the following 428-residue polypeptide: Enolase (428 aa).

Glutamine 163 lines the (2R)-2-phosphoglycerate pocket. Residue glutamate 205 is the Proton donor of the active site. Positions 242, 286, and 313 each coordinate Mg(2+). Residues lysine 338, arginine 367, serine 368, and lysine 389 each coordinate (2R)-2-phosphoglycerate. Catalysis depends on lysine 338, which acts as the Proton acceptor.

This sequence belongs to the enolase family. Requires Mg(2+) as cofactor.

The protein resides in the cytoplasm. It is found in the secreted. The protein localises to the cell surface. The catalysed reaction is (2R)-2-phosphoglycerate = phosphoenolpyruvate + H2O. It functions in the pathway carbohydrate degradation; glycolysis; pyruvate from D-glyceraldehyde 3-phosphate: step 4/5. Functionally, catalyzes the reversible conversion of 2-phosphoglycerate (2-PG) into phosphoenolpyruvate (PEP). It is essential for the degradation of carbohydrates via glycolysis. In Bordetella avium (strain 197N), this protein is Enolase.